A 274-amino-acid polypeptide reads, in one-letter code: Photosystem II extrinsic protein O (274 aa).

The first 28 residues, 1 to 28, serve as a signal peptide directing secretion; the sequence is MRFRPSIVALLSVCFGLLTFLYSGSAFA.

Belongs to the PsbO family. As to quaternary structure, PSII is composed of 1 copy each of membrane proteins PsbA, PsbB, PsbC, PsbD, PsbE, PsbF, PsbH, PsbI, PsbJ, PsbK, PsbL, PsbM, PsbT, PsbX, PsbY, PsbZ, Psb30/Ycf12, peripheral proteins PsbO, CyanoQ (PsbQ), PsbU, PsbV and a large number of cofactors. It forms dimeric complexes. Contacts PsbQ.

It is found in the cellular thylakoid membrane. In terms of biological role, one of the extrinsic, lumenal subunits of photosystem II (PSII), which stabilize and protect the oxygen-evolving complex. PSII is a light-driven water plastoquinone oxidoreductase, using light energy to abstract electrons from H(2)O, generating a proton gradient subsequently used for ATP formation. Required for dimerization of PSII and for binding of PsbQ to PSII. This chain is Photosystem II extrinsic protein O, found in Synechocystis sp. (strain ATCC 27184 / PCC 6803 / Kazusa).